Reading from the N-terminus, the 203-residue chain is Imidazoleglycerol-phosphate dehydratase (203 aa).

A disordered region spans residues 184–203 (DPRRSSQIPSSKGVLEQAGQ).

Belongs to the imidazoleglycerol-phosphate dehydratase family.

It localises to the cytoplasm. It carries out the reaction D-erythro-1-(imidazol-4-yl)glycerol 3-phosphate = 3-(imidazol-4-yl)-2-oxopropyl phosphate + H2O. It functions in the pathway amino-acid biosynthesis; L-histidine biosynthesis; L-histidine from 5-phospho-alpha-D-ribose 1-diphosphate: step 6/9. The sequence is that of Imidazoleglycerol-phosphate dehydratase from Prochlorococcus marinus (strain NATL1A).